Consider the following 114-residue polypeptide: Ribonuclease U2 (114 aa).

3 disulfides stabilise this stretch: Cys1/Cys54, Cys9/Cys113, and Cys55/Cys96. The Ca(2+) site is built by Asp29, Val30, Ala31, Asn32, Asp37, and Tyr39. A substrate-binding site is contributed by Tyr39–Glu49. His41 is a catalytic residue. The Proton acceptor role is filled by Glu62. Residue Arg85 coordinates substrate. His101 functions as the Proton donor in the catalytic mechanism. Asp108–Phe110 is a substrate binding site.

The protein belongs to the ribonuclease U2 family.

The catalysed reaction is [RNA] containing adenosine + H2O = an [RNA fragment]-3'-adenosine-3'-phosphate + a 5'-hydroxy-ribonucleotide-3'-[RNA fragment].. It catalyses the reaction [RNA] containing guanosine + H2O = an [RNA fragment]-3'-guanosine-3'-phosphate + a 5'-hydroxy-ribonucleotide-3'-[RNA fragment].. This Ustilago sphaerogena (Smut fungus) protein is Ribonuclease U2 (RNU2).